The chain runs to 623 residues: Xaa-Pro aminopeptidase 1 (623 aa).

Arg77 contacts a peptide. Position 304 is an N6-acetyllysine (Lys304). His395 is a binding site for a peptide. Residues Asp415, Asp426, and His489 each contribute to the Mn(2+) site. A peptide-binding residues include His489, His498, and Glu523. Glu523 and Glu537 together coordinate Mn(2+).

It belongs to the peptidase M24B family. In terms of assembly, homodimer. Mn(2+) serves as cofactor. Expressed in all tissues tested, including pancreas, heart, muscle, kidney, liver, lung and brain. Highest levels in pancreas.

Its subcellular location is the cytoplasm. It is found in the cytosol. The catalysed reaction is Release of any N-terminal amino acid, including proline, that is linked to proline, even from a dipeptide or tripeptide.. Its activity is regulated as follows. Inhibited by apstatin and the metal ion chelators EDTA and 1,10-phenanthroline. Partially inhibited by dithiothreitol. Not inhibited by enalaprilat or amastatin. Specifically inhibited by the pseudodipeptide CQ31. Inhibition by CQ31 indirectly activates the CARD8 inflammasome: dipeptide accumulation following PEPD inactivation weaky inhibit dipeptidyl peptidases DDP8 and DPP9, relieving DPP8- and/or DPP9-mediated inhibition of CARD8. In terms of biological role, metalloaminopeptidase that catalyzes the removal of a penultimate prolyl residue from the N-termini of peptides, such as Arg-Pro-Pro. Contributes to the degradation of bradykinin. The sequence is that of Xaa-Pro aminopeptidase 1 from Homo sapiens (Human).